The chain runs to 40 residues: Photosystem II reaction center protein J (40 aa).

A helical membrane pass occupies residues I8–F28.

The protein belongs to the PsbJ family. In terms of assembly, PSII is composed of 1 copy each of membrane proteins PsbA, PsbB, PsbC, PsbD, PsbE, PsbF, PsbH, PsbI, PsbJ, PsbK, PsbL, PsbM, PsbT, PsbX, PsbY, PsbZ, Psb30/Ycf12, at least 3 peripheral proteins of the oxygen-evolving complex and a large number of cofactors. It forms dimeric complexes.

It localises to the plastid. Its subcellular location is the chloroplast thylakoid membrane. Functionally, one of the components of the core complex of photosystem II (PSII). PSII is a light-driven water:plastoquinone oxidoreductase that uses light energy to abstract electrons from H(2)O, generating O(2) and a proton gradient subsequently used for ATP formation. It consists of a core antenna complex that captures photons, and an electron transfer chain that converts photonic excitation into a charge separation. The sequence is that of Photosystem II reaction center protein J from Eucalyptus globulus subsp. globulus (Tasmanian blue gum).